The sequence spans 218 residues: ATP phosphoribosyltransferase (218 aa).

It belongs to the ATP phosphoribosyltransferase family. Short subfamily. Heteromultimer composed of HisG and HisZ subunits.

It localises to the cytoplasm. It carries out the reaction 1-(5-phospho-beta-D-ribosyl)-ATP + diphosphate = 5-phospho-alpha-D-ribose 1-diphosphate + ATP. Its pathway is amino-acid biosynthesis; L-histidine biosynthesis; L-histidine from 5-phospho-alpha-D-ribose 1-diphosphate: step 1/9. Its function is as follows. Catalyzes the condensation of ATP and 5-phosphoribose 1-diphosphate to form N'-(5'-phosphoribosyl)-ATP (PR-ATP). Has a crucial role in the pathway because the rate of histidine biosynthesis seems to be controlled primarily by regulation of HisG enzymatic activity. This is ATP phosphoribosyltransferase from Trichormus variabilis (strain ATCC 29413 / PCC 7937) (Anabaena variabilis).